Reading from the N-terminus, the 127-residue chain is Glycine cleavage system H protein (127 aa).

The 82-residue stretch at 24-105 (TVKVGISDHA…PYEAWLFAVR (82 aa)) folds into the Lipoyl-binding domain. Lys-65 is subject to N6-lipoyllysine.

Belongs to the GcvH family. In terms of assembly, the glycine cleavage system is composed of four proteins: P, T, L and H. Requires (R)-lipoate as cofactor.

Functionally, the glycine cleavage system catalyzes the degradation of glycine. The H protein shuttles the methylamine group of glycine from the P protein to the T protein. The sequence is that of Glycine cleavage system H protein from Methylococcus capsulatus (strain ATCC 33009 / NCIMB 11132 / Bath).